The chain runs to 387 residues: Aminodeoxyfutalosine deaminase (387 aa).

Basic and acidic residues predominate over residues 1–10; sequence MRPAYDDPRT. The disordered stretch occupies residues 1 to 37; it reads MRPAYDDPRTTDQPITRARPPPRAARGRRLGEEPLTE. Zn(2+)-binding residues include His-61 and His-63. Residues Arg-116, Asp-183, and Gly-217 each coordinate substrate. His-244 provides a ligand contact to Zn(2+). The Proton donor role is filled by Glu-247. Zn(2+) is bound at residue Asp-325.

This sequence belongs to the metallo-dependent hydrolases superfamily. Adenosine and AMP deaminases family. Zn(2+) is required as a cofactor.

It carries out the reaction 6-amino-6-deoxyfutalosine + H2O + H(+) = futalosine + NH4(+). The protein operates within quinol/quinone metabolism; menaquinone biosynthesis. In terms of biological role, catalyzes the deamination of aminodeoxyfutalosine (AFL) into futalosine (FL), a step in the biosynthesis of menaquinone (MK, vitamin K2). The polypeptide is Aminodeoxyfutalosine deaminase (Streptomyces coelicolor (strain ATCC BAA-471 / A3(2) / M145)).